Here is a 176-residue protein sequence, read N- to C-terminus: Large ribosomal subunit protein eL20 (176 aa).

Residue lysine 11 forms a Glycyl lysine isopeptide (Lys-Gly) (interchain with G-Cter in SUMO2) linkage. Tyrosine 63 bears the Phosphotyrosine mark. Serine 71 carries the phosphoserine modification. Lysine 76 bears the N6-succinyllysine mark. Serine 123 bears the Phosphoserine mark. Glycyl lysine isopeptide (Lys-Gly) (interchain with G-Cter in SUMO2) cross-links involve residues lysine 128 and lysine 170.

This sequence belongs to the eukaryotic ribosomal protein eL20 family. In terms of assembly, component of the large ribosomal subunit. Binds IPO9 with high affinity.

The protein resides in the cytoplasm. Functionally, component of the large ribosomal subunit. The ribosome is a large ribonucleoprotein complex responsible for the synthesis of proteins in the cell. The chain is Large ribosomal subunit protein eL20 (Rpl18a) from Mus musculus (Mouse).